The chain runs to 45 residues: DNA replication protein repEB (45 aa).

Its function is as follows. Involved in T4 DNA replication. Important for the priming of leading strand DNA synthesis at oriE. Binds to ssDNA. This chain is DNA replication protein repEB (repEB), found in Enterobacteria phage T4 (Bacteriophage T4).